A 169-amino-acid chain; its full sequence is METLQGLLLWMLLSVGGVWASRGPLRPLCRPINATLAAEKEACPICITFTTSICAGYCPSMVRVMPAALPAIPQPVCTYRELRFASIRLPGCPPGVDPMVSFPVALSCHCGPCQIKTTDCGVFRDQPLACAPQASSSSKDPPSQPLTSTSTPTPGASRRSSHPLPIKTS.

An N-terminal signal peptide occupies residues 1–20 (METLQGLLLWMLLSVGGVWA). 6 cysteine pairs are disulfide-bonded: cysteine 29-cysteine 77, cysteine 43-cysteine 92, cysteine 46-cysteine 130, cysteine 54-cysteine 108, cysteine 58-cysteine 110, and cysteine 113-cysteine 120. N-linked (GlcNAc...) asparagine glycosylation occurs at asparagine 33. The interval 131–169 (APQASSSSKDPPSQPLTSTSTPTPGASRRSSHPLPIKTS) is disordered. Serine 138 and serine 143 each carry an O-linked (GalNAc...) serine glycan. The segment covering 145–158 (PLTSTSTPTPGASR) has biased composition (low complexity). Threonine 147 is a glycosylation site (O-linked (GalNAc...) threonine). O-linked (GalNAc...) serine glycosylation is present at serine 148. Threonine 149 is a glycosylation site (O-linked (GalNAc...) threonine). Serine 150 is a glycosylation site (O-linked (GalNAc...) serine). O-linked (GalNAc...) threonine glycans are attached at residues threonine 151 and threonine 153. Residues serine 157, serine 160, serine 161, and serine 169 are each glycosylated (O-linked (GalNAc...) serine).

The protein belongs to the glycoprotein hormones subunit beta family. As to quaternary structure, heterodimer of a common alpha chain and a unique beta chain which confers biological specificity to thyrotropin, lutropin, follitropin and gonadotropin. Post-translationally, microheterogeneity at Asn-33. O-glycosylation appears to be responsible for the beta subunit contribution to the difference in LH-receptor binding activity between LSH-B and CG-B.

It localises to the secreted. Its function is as follows. Promotes spermatogenesis and ovulation by stimulating the testes and ovaries to synthesize steroids. This is Lutropin/choriogonadotropin subunit beta (LHB) from Equus caballus (Horse).